Here is an 810-residue protein sequence, read N- to C-terminus: Lon protease (810 aa).

The Lon N-terminal domain occupies 16–209 (YPVPPLRDIV…RVYAFMEGEI (194 aa)). 361–368 (GPPGVGKT) lines the ATP pocket. The Lon proteolytic domain maps to 598-779 (EDLVGVTTGL…DDVLKHALVR (182 aa)). Active-site residues include Ser685 and Lys728.

The protein belongs to the peptidase S16 family. In terms of assembly, homohexamer. Organized in a ring with a central cavity.

Its subcellular location is the cytoplasm. The catalysed reaction is Hydrolysis of proteins in presence of ATP.. ATP-dependent serine protease that mediates the selective degradation of mutant and abnormal proteins as well as certain short-lived regulatory proteins. Required for cellular homeostasis and for survival from DNA damage and developmental changes induced by stress. Degrades polypeptides processively to yield small peptide fragments that are 5 to 10 amino acids long. Binds to DNA in a double-stranded, site-specific manner. Involved in iron uptake. The protein is Lon protease of Azospirillum brasilense.